A 431-amino-acid chain; its full sequence is UDP-N-acetylglucosamine 1-carboxyvinyltransferase (431 aa).

22-23 (KN) provides a ligand contact to phosphoenolpyruvate. R93 lines the UDP-N-acetyl-alpha-D-glucosamine pocket. C117 serves as the catalytic Proton donor. At C117 the chain carries 2-(S-cysteinyl)pyruvic acid O-phosphothioketal. D307 and V329 together coordinate UDP-N-acetyl-alpha-D-glucosamine.

The protein belongs to the EPSP synthase family. MurA subfamily.

The protein localises to the cytoplasm. The enzyme catalyses phosphoenolpyruvate + UDP-N-acetyl-alpha-D-glucosamine = UDP-N-acetyl-3-O-(1-carboxyvinyl)-alpha-D-glucosamine + phosphate. The protein operates within cell wall biogenesis; peptidoglycan biosynthesis. Its function is as follows. Cell wall formation. Adds enolpyruvyl to UDP-N-acetylglucosamine. The polypeptide is UDP-N-acetylglucosamine 1-carboxyvinyltransferase (Nitrosococcus oceani (strain ATCC 19707 / BCRC 17464 / JCM 30415 / NCIMB 11848 / C-107)).